We begin with the raw amino-acid sequence, 93 residues long: uncharacterized protein (93 aa).

Residues 68 to 88 traverse the membrane as a helical segment; sequence WLVTVVLANGVVSLFLLGGLI.

The protein localises to the membrane. This is an uncharacterized protein from Mycoplasma pneumoniae (strain ATCC 29342 / M129 / Subtype 1) (Mycoplasmoides pneumoniae).